Reading from the N-terminus, the 273-residue chain is 2,3,4,5-tetrahydropyridine-2,6-dicarboxylate N-succinyltransferase (273 aa).

Arg-104 and Asp-141 together coordinate substrate.

It belongs to the transferase hexapeptide repeat family. In terms of assembly, homotrimer.

The protein resides in the cytoplasm. It carries out the reaction (S)-2,3,4,5-tetrahydrodipicolinate + succinyl-CoA + H2O = (S)-2-succinylamino-6-oxoheptanedioate + CoA. It participates in amino-acid biosynthesis; L-lysine biosynthesis via DAP pathway; LL-2,6-diaminopimelate from (S)-tetrahydrodipicolinate (succinylase route): step 1/3. This Nitrosomonas europaea (strain ATCC 19718 / CIP 103999 / KCTC 2705 / NBRC 14298) protein is 2,3,4,5-tetrahydropyridine-2,6-dicarboxylate N-succinyltransferase.